Consider the following 238-residue polypeptide: Probable RNA/DNA demethylase ALKBH6 (238 aa).

Residues 96–227 (PANHVLVNQY…RVSLTIRRVP (132 aa)) form the Fe2OG dioxygenase domain. 2 residues coordinate 2-oxoglutarate: N103 and Y105. 2 residues coordinate Fe cation: H114 and D116. The tract at residues 138–161 (YEPRRPEDDDPTEQPRPPPRPTTS) is disordered. H182 provides a ligand contact to Fe cation. 2-oxoglutarate contacts are provided by R218 and S220.

It belongs to the alkB family. In terms of assembly, interacts with VCPKMT. Requires Fe(2+) as cofactor. Widely expressed, with highest expression in testis and pancreas.

Its subcellular location is the cytoplasm. It localises to the nucleus. Its function is as follows. Probable Fe(2+)/2-oxoglutarate-dependent dioxygenase involved in oxidative demethylation of nucleic acids. Binds nucleic acids with a preference for ssDNA or ssRNA to other types of DNAs. May play a role in nucleic acid damage repair. This chain is Probable RNA/DNA demethylase ALKBH6, found in Homo sapiens (Human).